Consider the following 194-residue polypeptide: Molybdenum cofactor guanylyltransferase (194 aa).

Residues 12 to 14 (LAG), Lys25, Asn53, Asp70, and Asp100 contribute to the GTP site. Asp100 contributes to the Mg(2+) binding site.

The protein belongs to the MobA family. Monomer. The cofactor is Mg(2+).

It is found in the cytoplasm. The enzyme catalyses Mo-molybdopterin + GTP + H(+) = Mo-molybdopterin guanine dinucleotide + diphosphate. Its function is as follows. Transfers a GMP moiety from GTP to Mo-molybdopterin (Mo-MPT) cofactor (Moco or molybdenum cofactor) to form Mo-molybdopterin guanine dinucleotide (Mo-MGD) cofactor. This is Molybdenum cofactor guanylyltransferase from Photobacterium profundum (strain SS9).